A 491-amino-acid polypeptide reads, in one-letter code: Transmembrane protein 39B (491 aa).

The disordered stretch occupies residues 1–56; the sequence is MAGGRRGANRTTYCRSPLSNDTGSVGNGNHSTSSPVTGVRSRTRNGSGTGMSSPPL. Asn9, Asn20, Asn29, and Asn45 each carry an N-linked (GlcNAc...) asparagine glycan. 2 stretches are compositionally biased toward polar residues: residues 9-36 and 44-56; these read NRTT…SSPV and RNGS…SPPL. Transmembrane regions (helical) follow at residues 79–99, 115–135, 152–172, 185–205, 290–310, 322–342, 423–443, and 449–469; these read LFEL…YVNI, TSLN…IVLA, LSFP…TLAG, TYSV…IPFF, EVLV…VWFV, CELF…HLLP, ILNI…YSLM, and HQTI…FKLL.

The protein belongs to the TMEM39 family. In terms of tissue distribution, expressed in the ovary, followed by the intestine and brain.

It localises to the endoplasmic reticulum membrane. Its function is as follows. May protect the cells against DNA damage caused by exposure to the cold-warming stress and facilitates tissue damage repair during the recovery phase. The polypeptide is Transmembrane protein 39B (Danio rerio (Zebrafish)).